Consider the following 373-residue polypeptide: Chaperone protein DnaJ (373 aa).

Residues 5–70 form the J domain; the sequence is DYYELLEVDR…EKRALYDQYG (66 aa). A CR-type zinc finger spans residues 134-211; sequence GTQKEVHYSF…CSGKGYRIEK (78 aa). Cys-147, Cys-150, Cys-163, Cys-166, Cys-185, Cys-188, Cys-199, and Cys-202 together coordinate Zn(2+). CXXCXGXG motif repeat units follow at residues 147–154, 163–170, 185–192, and 199–206; these read CSACKGTG, CPECHGRG, CPRCHGQG, and CEECSGKG.

The protein belongs to the DnaJ family. In terms of assembly, homodimer. Requires Zn(2+) as cofactor.

The protein resides in the cytoplasm. Its function is as follows. Participates actively in the response to hyperosmotic and heat shock by preventing the aggregation of stress-denatured proteins and by disaggregating proteins, also in an autonomous, DnaK-independent fashion. Unfolded proteins bind initially to DnaJ; upon interaction with the DnaJ-bound protein, DnaK hydrolyzes its bound ATP, resulting in the formation of a stable complex. GrpE releases ADP from DnaK; ATP binding to DnaK triggers the release of the substrate protein, thus completing the reaction cycle. Several rounds of ATP-dependent interactions between DnaJ, DnaK and GrpE are required for fully efficient folding. Also involved, together with DnaK and GrpE, in the DNA replication of plasmids through activation of initiation proteins. The protein is Chaperone protein DnaJ of Nitratiruptor sp. (strain SB155-2).